We begin with the raw amino-acid sequence, 882 residues long: Protein translocase subunit SecA (882 aa).

ATP-binding positions include Q79, 97 to 101 (GEGKT), and D487.

It belongs to the SecA family.

The protein resides in the plastid. Its subcellular location is the chloroplast stroma. It is found in the chloroplast thylakoid membrane. It carries out the reaction ATP + H2O + cellular proteinSide 1 = ADP + phosphate + cellular proteinSide 2.. Its function is as follows. Has a central role in coupling the hydrolysis of ATP to the transfer of proteins across the thylakoid membrane. This is Protein translocase subunit SecA from Gracilaria tenuistipitata var. liui (Red alga).